Reading from the N-terminus, the 332-residue chain is Small ribosomal subunit protein uS2 (332 aa).

The protein belongs to the universal ribosomal protein uS2 family.

The chain is Small ribosomal subunit protein uS2 from Nitrobacter winogradskyi (strain ATCC 25391 / DSM 10237 / CIP 104748 / NCIMB 11846 / Nb-255).